The sequence spans 669 residues: uncharacterized protein (669 aa).

12 consecutive transmembrane segments (helical) span residues 9–29 (PLVIGVTLFFILLLMAMIFIA), 48–68 (FSWFYVLTFSVFLGFLLILSV), 87–107 (FLSWLAMLFAAGMGVGLMFFG), 139–159 (WGIHAWAVYGTIALALAYFGF), 186–206 (AIDVMALLATLFGIITTLGFG), 224–244 (SFALQVGVIVVVMCLAVFSAI), 259–279 (LTLAFCLLLFVLISGPTLYLL), 314–334 (WTVLYWAWWCSWAPFVGLFIA), 345–365 (FIFGVLVIPSLFGILWFTVFG), 397–417 (YLPLPTITGFVSLLVILLFFI), 444–464 (AIMWGTLMSVVAIVLMQSGGL), and 470–490 (MTLIVALPFALLMLVMCFSLW).

This sequence belongs to the BCCT transporter (TC 2.A.15) family.

Its subcellular location is the cell inner membrane. This is an uncharacterized protein from Haemophilus influenzae (strain ATCC 51907 / DSM 11121 / KW20 / Rd).